The following is a 673-amino-acid chain: MDPKLEQRARELRALLQKASIAYYVHDAPILEDSVYDRLYRELQELERAYPELITPDSPTQRVGEKPAEQFPTVSHRIPLYSLENAFNLEELKEWQERLWRVLGRTPEEGELEYVCELKIDGAALALTYVDGLLQRGATRGDGQSGEDITPNIRAIPSIPLRLATAAPPPVLEVRGEAYLPIAEFERINRERCSAGDPPFANPRNCAAGTLRQLDSRVVAARKLSFFAYALHWPEGWPSGDPPQTQWECLQRLKDLGLPVNPLSQVCRGLEEVVQFYERWRQAQLPYACDGVVVKLNSLRLQEEAGFTQKFPRWAIALKYPAQEVPTRIRAIVASVGRTGAVTPVAELEPVLLAGTTVSRASLHNADRLEELDVHIGDTAIVRKAGEIIPEVVGILKELRPPDAVPYRLPSHCPECGTLLVRPAGEAITRCPNPACPAKIRGQLQHWASRDAMDIEGLGEKRVAQLVEKLGVRTVADLYRLTPEHLESLEGMGSRSSQKLVQAIQRSRQQPWERVLYGLGIPHVGVVTAQILAQHFPAPELLAQARAEDIAQIYGIGAEIAEAVVAWFADPAHQKLLQELRELGIPALPRQAAPAVSQVLAGKKFVITGTLPTLSRQQAKAWIESRGGKVTASVSRQTDYVVVGSDPGSKLKQAQALGIPLLSEAELLALDPK.

Residues 33 to 37 (DSVYD), 82 to 83 (SL), and glutamate 117 each bind NAD(+). The active-site N6-AMP-lysine intermediate is lysine 119. NAD(+) contacts are provided by arginine 140, glutamate 177, lysine 295, and lysine 319. 4 residues coordinate Zn(2+): cysteine 413, cysteine 416, cysteine 431, and cysteine 436. Positions 595–673 (AVSQVLAGKK…EAELLALDPK (79 aa)) constitute a BRCT domain.

This sequence belongs to the NAD-dependent DNA ligase family. LigA subfamily. The cofactor is Mg(2+). Mn(2+) serves as cofactor.

It carries out the reaction NAD(+) + (deoxyribonucleotide)n-3'-hydroxyl + 5'-phospho-(deoxyribonucleotide)m = (deoxyribonucleotide)n+m + AMP + beta-nicotinamide D-nucleotide.. DNA ligase that catalyzes the formation of phosphodiester linkages between 5'-phosphoryl and 3'-hydroxyl groups in double-stranded DNA using NAD as a coenzyme and as the energy source for the reaction. It is essential for DNA replication and repair of damaged DNA. In Synechococcus sp. (strain JA-3-3Ab) (Cyanobacteria bacterium Yellowstone A-Prime), this protein is DNA ligase.